Reading from the N-terminus, the 120-residue chain is Basic phospholipase A2 Cc2-PLA2 (120 aa).

7 disulfides stabilise this stretch: cysteine 26–cysteine 113, cysteine 28–cysteine 44, cysteine 43–cysteine 95, cysteine 49–cysteine 120, cysteine 50–cysteine 88, cysteine 57–cysteine 81, and cysteine 75–cysteine 86. Residues tyrosine 27, glycine 29, and glycine 31 each coordinate Ca(2+). The active site involves histidine 47. A Ca(2+)-binding site is contributed by aspartate 48. Residue aspartate 89 is part of the active site.

The protein belongs to the phospholipase A2 family. Group II subfamily. D49 sub-subfamily. In terms of assembly, monomer. Ca(2+) is required as a cofactor. Expressed by the venom gland.

It localises to the secreted. The catalysed reaction is a 1,2-diacyl-sn-glycero-3-phosphocholine + H2O = a 1-acyl-sn-glycero-3-phosphocholine + a fatty acid + H(+). In terms of biological role, basic phospholipase A2 that inhibits ADP-, thrombin- and arachidonic acid-induced platelet aggregation. It also exhibits anticoagulant effects upon human plasma in vitro. It induces a high hemolytic activity reaching its maximum after 24 hours. It induces a marked elevation of plasmatic levels of interleukin-6 and -10, eosinophil peroxidase and complement lytic activities and it also provokes a drastic increase of lymphocytes, monocytes and neutrophils in peripheral blood accompanied by a rapid intense migration of neutrophils to the peritoneal cavity. PLA2 catalyzes the calcium-dependent hydrolysis of the 2-acyl groups in 3-sn-phosphoglycerides. The chain is Basic phospholipase A2 Cc2-PLA2 from Cerastes cerastes (Horned desert viper).